Here is a 92-residue protein sequence, read N- to C-terminus: Small ribosomal subunit protein uS19c (92 aa).

It belongs to the universal ribosomal protein uS19 family.

The protein resides in the plastid. Functionally, protein S19 forms a complex with S13 that binds strongly to the 16S ribosomal RNA. The chain is Small ribosomal subunit protein uS19c from Cuscuta reflexa (Southern Asian dodder).